Consider the following 227-residue polypeptide: Cytochrome c oxidase subunit 2 (227 aa).

The Mitochondrial intermembrane portion of the chain corresponds to 1-14 (MAYPFQLGFQDASS). Residues 15–45 (PIMEELLHFHDHTLMIVFLISSLVLYIISLM) form a helical membrane-spanning segment. The Mitochondrial matrix segment spans residues 46-59 (LTTKLTHTSTMDAQ). The chain crosses the membrane as a helical span at residues 60-87 (EVETIWTILPAIILILIALPSLRILYMM). Residues 88 to 227 (DEINNPSLTV…HFENWSLSMI (140 aa)) lie on the Mitochondrial intermembrane side of the membrane. The Cu cation site is built by His161, Cys196, Glu198, Cys200, His204, and Met207. Glu198 serves as a coordination point for Mg(2+).

This sequence belongs to the cytochrome c oxidase subunit 2 family. As to quaternary structure, component of the cytochrome c oxidase (complex IV, CIV), a multisubunit enzyme composed of 14 subunits. The complex is composed of a catalytic core of 3 subunits MT-CO1, MT-CO2 and MT-CO3, encoded in the mitochondrial DNA, and 11 supernumerary subunits COX4I, COX5A, COX5B, COX6A, COX6B, COX6C, COX7A, COX7B, COX7C, COX8 and NDUFA4, which are encoded in the nuclear genome. The complex exists as a monomer or a dimer and forms supercomplexes (SCs) in the inner mitochondrial membrane with NADH-ubiquinone oxidoreductase (complex I, CI) and ubiquinol-cytochrome c oxidoreductase (cytochrome b-c1 complex, complex III, CIII), resulting in different assemblies (supercomplex SCI(1)III(2)IV(1) and megacomplex MCI(2)III(2)IV(2)). Found in a complex with TMEM177, COA6, COX18, COX20, SCO1 and SCO2. Interacts with TMEM177 in a COX20-dependent manner. Interacts with COX20. Interacts with COX16. Cu cation serves as cofactor.

It localises to the mitochondrion inner membrane. It carries out the reaction 4 Fe(II)-[cytochrome c] + O2 + 8 H(+)(in) = 4 Fe(III)-[cytochrome c] + 2 H2O + 4 H(+)(out). Component of the cytochrome c oxidase, the last enzyme in the mitochondrial electron transport chain which drives oxidative phosphorylation. The respiratory chain contains 3 multisubunit complexes succinate dehydrogenase (complex II, CII), ubiquinol-cytochrome c oxidoreductase (cytochrome b-c1 complex, complex III, CIII) and cytochrome c oxidase (complex IV, CIV), that cooperate to transfer electrons derived from NADH and succinate to molecular oxygen, creating an electrochemical gradient over the inner membrane that drives transmembrane transport and the ATP synthase. Cytochrome c oxidase is the component of the respiratory chain that catalyzes the reduction of oxygen to water. Electrons originating from reduced cytochrome c in the intermembrane space (IMS) are transferred via the dinuclear copper A center (CU(A)) of subunit 2 and heme A of subunit 1 to the active site in subunit 1, a binuclear center (BNC) formed by heme A3 and copper B (CU(B)). The BNC reduces molecular oxygen to 2 water molecules using 4 electrons from cytochrome c in the IMS and 4 protons from the mitochondrial matrix. The sequence is that of Cytochrome c oxidase subunit 2 (MT-CO2) from Oryctolagus cuniculus (Rabbit).